We begin with the raw amino-acid sequence, 86 residues long: uncharacterized protein (86 aa).

This is an uncharacterized protein from Helicobacter pylori (strain J99 / ATCC 700824) (Campylobacter pylori J99).